A 78-amino-acid chain; its full sequence is MKITYRKSAIGYSRDQKATIRSLGLRRLNSVVIHDDTPTIRGMVFKVRHLVSVEEIADDTSPDAETGADLERDGGNRS.

Over residues 58–68 (DDTSPDAETGA) the composition is skewed to acidic residues. Positions 58–78 (DDTSPDAETGADLERDGGNRS) are disordered. A compositionally biased stretch (basic and acidic residues) spans 69–78 (DLERDGGNRS).

This sequence belongs to the universal ribosomal protein uL30 family. As to quaternary structure, part of the 50S ribosomal subunit.

The polypeptide is Large ribosomal subunit protein uL30 (Roseiflexus sp. (strain RS-1)).